The following is a 1558-amino-acid chain: ABC transporter NFT1 (1558 aa).

At 1–29 (MIKNGTCPFWERDDLSECARREYIEFKFP) the chain is on the extracellular side. N-linked (GlcNAc...) asparagine glycosylation occurs at Asn4. The chain crosses the membrane as a helical span at residues 30 to 50 (LFILLTGMIYAFCKVFRAFYL). The Cytoplasmic segment spans residues 51–103 (RRKNHTNEAPEFEEQGNGNHEYARFSVLRLKSAWESRSFCNVNNRSTFDKFKK). The chain crosses the membrane as a helical span at residues 104 to 124 (FIEGAFIVLQLTIHLYILSNM). The Extracellular segment spans residues 125 to 130 (PMDNKK). Residues 131-151 (FFHQGFLVQMFLWILLLVVIT) traverse the membrane as a helical segment. Residues 152-169 (LRLISASQSFRWVLACKR) lie on the Cytoplasmic side of the membrane. A helical membrane pass occupies residues 170 to 190 (DLWAVSFYSYASLFTLSILPL). Over 191 to 201 (RSVFIGKIKDK) the chain is Extracellular. Residues 202–222 (IMVKYIISETFIDLALLLLLS) form a helical membrane-spanning segment. At 223–302 (TSSIEGTRYS…SSKKGRLLPN (80 aa)) the chain is on the cytoplasmic side. A helical membrane pass occupies residues 303-323 (IICYFKAVFISQLFLAFVSSF). The ABC transmembrane type-1 1 domain maps to 311–621 (FISQLFLAFV…IASTVSLLIQ (311 aa)). Residues 324–351 (LNFVPSLLMPRILSYVNDPKSQSWNLVS) are Extracellular-facing. A helical transmembrane segment spans residues 352 to 374 (LYVSSMLVSKIIATTCRGQGLFL). Residues 375–449 (GEKGTMQLRT…VMSIDAFKVS (75 aa)) are Cytoplasmic-facing. The interval 410 to 434 (NASTSFEENPDSSEAEPRKKSSRKD) is disordered. Basic and acidic residues predominate over residues 424 to 434 (AEPRKKSSRKD). The chain crosses the membrane as a helical span at residues 450–470 (EAMNTFYLACEAVFMTVTALM). The Extracellular portion of the chain corresponds to 471–481 (ILYSLLGWSAF). Residues 482 to 504 (AGTFALLAMIPLNFWCATFYGNY) traverse the membrane as a helical segment. Over 505–558 (QADQLILTDKRTSGISEALNSIRVIKLLAWENLFYQKIINVRDGEIRLLKKKAT) the chain is Cytoplasmic. A helical transmembrane segment spans residues 559–579 (IFFLNHLIWFFGPTLVSAITF). Residues 580–584 (SVFIK) lie on the Extracellular side of the membrane. Residues 585–605 (FQNQTLTPTIAFTALSLFAIL) form a helical membrane-spanning segment. At 606 to 953 (RTPMDQIAST…KFSAYKWLAD (348 aa)) the chain is on the cytoplasmic side. In terms of domain architecture, ABC transporter 1 spans 651-892 (FGFEDASMEW…NEFLRESINN (242 aa)). 686–693 (GPTGSGKS) contributes to the ATP binding site. Positions 892-901 (NDSKNTTHNQ) are enriched in polar residues. Residues 892–926 (NDSKNTTHNQIDLKRSTTSKKTKNGDPEGENSQDE) form a disordered region. The chain crosses the membrane as a helical span at residues 954-974 (YFGGLGVVFVFTSSAILIHGI). Residues 961–1251 (VFVFTSSAIL…IIKVFSSVEL (291 aa)) form the ABC transmembrane type-1 2 domain. At 975–1013 (TLSQGFWLRYWLETGSSGSKSTWLYRIVEGHSNIYFILT) the chain is on the extracellular side. A helical membrane pass occupies residues 1014 to 1034 (YIVIGFVSSFLTSGKVWIAII). Topologically, residues 1035–1082 (SGTNVTKKIFAKLLSSILYAKLRFHNVTPTGRIMNRFSKDMDIIDQQL) are cytoplasmic. Residues 1083-1105 (IPNFEGLSYSVVVCLWIILLIGY) form a helical membrane-spanning segment. The Extracellular portion of the chain corresponds to 1106–1109 (VTPQ). The chain crosses the membrane as a helical span at residues 1110–1132 (FLLFAIPLCALYYTVCTLYLRAS). At 1133-1199 (RELKRIDNIN…ATEWITYRVD (67 aa)) the chain is on the cytoplasmic side. Residues 1200-1220 (IIGTLVLFSSSVMIIMKASYL) form a helical membrane-spanning segment. At 1221 to 1222 (DA) the chain is on the extracellular side. A helical membrane pass occupies residues 1223–1243 (GLAGILLSNAFSFTETAQWII). The Cytoplasmic portion of the chain corresponds to 1244 to 1558 (KVFSSVELLM…LAKVSFDNKR (315 aa)). The ABC transporter 2 domain maps to 1285 to 1538 (VELKNLSLRY…RNTIFYRLCR (254 aa)). 1319 to 1326 (GRTGAGKS) contacts ATP.

Belongs to the ABC transporter superfamily. ABCC family. Conjugate transporter (TC 3.A.1.208) subfamily.

The protein resides in the membrane. The chain is ABC transporter NFT1 (NFT1) from Saccharomyces cerevisiae (strain YJM789) (Baker's yeast).